Consider the following 180-residue polypeptide: ATP synthase subunit delta (180 aa).

Belongs to the ATPase delta chain family. As to quaternary structure, F-type ATPases have 2 components, F(1) - the catalytic core - and F(0) - the membrane proton channel. F(1) has five subunits: alpha(3), beta(3), gamma(1), delta(1), epsilon(1). F(0) has three main subunits: a(1), b(2) and c(10-14). The alpha and beta chains form an alternating ring which encloses part of the gamma chain. F(1) is attached to F(0) by a central stalk formed by the gamma and epsilon chains, while a peripheral stalk is formed by the delta and b chains.

It is found in the cell inner membrane. Its function is as follows. F(1)F(0) ATP synthase produces ATP from ADP in the presence of a proton or sodium gradient. F-type ATPases consist of two structural domains, F(1) containing the extramembraneous catalytic core and F(0) containing the membrane proton channel, linked together by a central stalk and a peripheral stalk. During catalysis, ATP synthesis in the catalytic domain of F(1) is coupled via a rotary mechanism of the central stalk subunits to proton translocation. In terms of biological role, this protein is part of the stalk that links CF(0) to CF(1). It either transmits conformational changes from CF(0) to CF(1) or is implicated in proton conduction. This Citrifermentans bemidjiense (strain ATCC BAA-1014 / DSM 16622 / JCM 12645 / Bem) (Geobacter bemidjiensis) protein is ATP synthase subunit delta.